The primary structure comprises 425 residues: MHDIEYIRKNPEGFEKAMKSRGIRESTAEEILEIDHEKRSLTTKLQDLNRQRNEITEEIKKLKMSKSPCEEQIELSKSITNEIEAISLKEQAEKDKLVNVLSNLPNIPAQDVPIGADENSNLEVRRYGGKRQFDFVPESHYELGEKLGLMDFEQAARISGSRFTILKGQLAKLGRALINCMLEMHVNEFGYTEVYHPALVKNEAMYNVGQLPKFSDDSYLTTDELRLIPTSEVFLTNLVADKIMEEKELPIRFTAYSECFRKEAGSAGRDTRGMIRQHQFGKVELVSITTEDQSNDELERMTSVAEEILKKLELPYRVMLLCSGDMGFAAQRTYDIEVWLPGQNKYREISSCSNCGAFQARRMNTKYSSETDKKMKKYIHTLNGSALAIGRTIIAIMENYQNSDGSIAIPNVLQKYMSNDTVISK.

Position 230-232 (230-232 (TSE)) interacts with L-serine. 261–263 (RKE) is a binding site for ATP. E284 contributes to the L-serine binding site. 348–351 (EISS) contributes to the ATP binding site. S385 contacts L-serine.

Belongs to the class-II aminoacyl-tRNA synthetase family. Type-1 seryl-tRNA synthetase subfamily. As to quaternary structure, homodimer. The tRNA molecule binds across the dimer.

It is found in the cytoplasm. It carries out the reaction tRNA(Ser) + L-serine + ATP = L-seryl-tRNA(Ser) + AMP + diphosphate + H(+). The enzyme catalyses tRNA(Sec) + L-serine + ATP = L-seryl-tRNA(Sec) + AMP + diphosphate + H(+). The protein operates within aminoacyl-tRNA biosynthesis; selenocysteinyl-tRNA(Sec) biosynthesis; L-seryl-tRNA(Sec) from L-serine and tRNA(Sec): step 1/1. In terms of biological role, catalyzes the attachment of serine to tRNA(Ser). Is also able to aminoacylate tRNA(Sec) with serine, to form the misacylated tRNA L-seryl-tRNA(Sec), which will be further converted into selenocysteinyl-tRNA(Sec). The sequence is that of Serine--tRNA ligase from Wolbachia pipientis wMel.